Reading from the N-terminus, the 144-residue chain is Large ribosomal subunit protein uL14 (144 aa).

It belongs to the universal ribosomal protein uL14 family. In terms of assembly, part of the 50S ribosomal subunit. Forms a cluster with proteins L3 and L24e, part of which may contact the 16S rRNA in 2 intersubunit bridges.

Its function is as follows. Binds to 23S rRNA. Forms part of two intersubunit bridges in the 70S ribosome. This chain is Large ribosomal subunit protein uL14, found in Pyrobaculum arsenaticum (strain DSM 13514 / JCM 11321 / PZ6).